A 418-amino-acid polypeptide reads, in one-letter code: UDP-N-acetylglucosamine 1-carboxyvinyltransferase (418 aa).

23–24 (KN) serves as a coordination point for phosphoenolpyruvate. Residue Arg-93 participates in UDP-N-acetyl-alpha-D-glucosamine binding. Asp-117 acts as the Proton donor in catalysis. Residues Asp-305 and Val-327 each coordinate UDP-N-acetyl-alpha-D-glucosamine.

The protein belongs to the EPSP synthase family. MurA subfamily.

It is found in the cytoplasm. It carries out the reaction phosphoenolpyruvate + UDP-N-acetyl-alpha-D-glucosamine = UDP-N-acetyl-3-O-(1-carboxyvinyl)-alpha-D-glucosamine + phosphate. It participates in cell wall biogenesis; peptidoglycan biosynthesis. Its function is as follows. Cell wall formation. Adds enolpyruvyl to UDP-N-acetylglucosamine. The protein is UDP-N-acetylglucosamine 1-carboxyvinyltransferase of Mycobacterium bovis (strain ATCC BAA-935 / AF2122/97).